We begin with the raw amino-acid sequence, 112 residues long: Diuretic hormone class 2 (112 aa).

The first 24 residues, 1–24, serve as a signal peptide directing secretion; that stretch reads MVRATCLLASCVLFALLLIVPASA. The propeptide occupies 25-71; that stretch reads YPRYPSNYFREEGQYEPEEIMDMLNRLGNLIQMERKMENYKEDITSE. Pro104 carries the post-translational modification Proline amide. Positions 108–112 are excised as a propeptide; that stretch reads RRDAH.

As to expression, expressed in corpora cardiaca (CC), corpora allata (CA), antennal lobe (AL) and gnathal ganglion (GNG) (at protein level). Expression in CC, CA and AL detected in most animals, expression in GNG in few animals (at protein level).

The protein resides in the secreted. Regulation of fluid secretion. Stimulates Malpighian tubule fluid secretion. In Agrotis ipsilon (Black cutworm moth), this protein is Diuretic hormone class 2.